A 217-amino-acid chain; its full sequence is Uracil-DNA glycosylase (217 aa).

The active-site Proton acceptor is the Asp-62.

Belongs to the uracil-DNA glycosylase (UDG) superfamily. UNG family.

It is found in the cytoplasm. It catalyses the reaction Hydrolyzes single-stranded DNA or mismatched double-stranded DNA and polynucleotides, releasing free uracil.. Functionally, excises uracil residues from the DNA which can arise as a result of misincorporation of dUMP residues by DNA polymerase or due to deamination of cytosine. The sequence is that of Uracil-DNA glycosylase from Streptococcus thermophilus (strain ATCC BAA-491 / LMD-9).